A 551-amino-acid chain; its full sequence is Rqc2 homolog RqcH (551 aa).

It belongs to the NEMF family. Associates with stalled 50S ribosomal subunits, binds to RqcP. Interacts with human fibronectin.

Its subcellular location is the secreted. It localises to the capsule. The protein localises to the cell surface. It is found in the cytoplasm. Functionally, key component of the ribosome quality control system (RQC), a ribosome-associated complex that mediates the extraction of incompletely synthesized nascent chains from stalled ribosomes and their subsequent degradation. RqcH recruits Ala-charged tRNA, and with RqcP directs the elongation of stalled nascent chains on 50S ribosomal subunits, leading to non-templated C-terminal alanine extensions (Ala tail). The Ala tail promotes nascent chain degradation. May add between 1 and at least 8 Ala residues. Binds to stalled 50S ribosomal subunits. Its function is as follows. Plays a significant role in virulence. Recombinant protein binds to immobilized human fibronectin; binding is saturable and competed by heparin. Purified protein inhibits binding of whole cells to fibronectin. This chain is Rqc2 homolog RqcH, found in Streptococcus pneumoniae serotype 2 (strain D39 / NCTC 7466).